The primary structure comprises 161 residues: Allophycocyanin beta subunit (161 aa).

Residue asparagine 71 is modified to N4-methylasparagine. Cysteine 81 lines the (2R,3E)-phycocyanobilin pocket.

This sequence belongs to the phycobiliprotein family. As to quaternary structure, heterodimer of an alpha and a beta chain. In terms of processing, contains one covalently linked phycocyanobilin chromophore. The chromophore is added by the phycocyanobilin lyase CpcUS.

It localises to the cellular thylakoid membrane. Light-harvesting photosynthetic bile pigment-protein from the phycobiliprotein complex. Allophycocyanin has a maximum absorption at approximately 650 nanometers. This chain is Allophycocyanin beta subunit (apcB), found in Picosynechococcus sp. (strain ATCC 27264 / PCC 7002 / PR-6) (Agmenellum quadruplicatum).